A 151-amino-acid chain; its full sequence is Ribosome maturation factor RimP (151 aa).

Belongs to the RimP family.

It is found in the cytoplasm. In terms of biological role, required for maturation of 30S ribosomal subunits. The chain is Ribosome maturation factor RimP from Aliivibrio salmonicida (strain LFI1238) (Vibrio salmonicida (strain LFI1238)).